We begin with the raw amino-acid sequence, 133 residues long: Small ribosomal subunit protein uS8 (133 aa).

Belongs to the universal ribosomal protein uS8 family. As to quaternary structure, part of the 30S ribosomal subunit. Contacts proteins S5 and S12.

Its function is as follows. One of the primary rRNA binding proteins, it binds directly to 16S rRNA central domain where it helps coordinate assembly of the platform of the 30S subunit. The chain is Small ribosomal subunit protein uS8 from Acaryochloris marina (strain MBIC 11017).